A 142-amino-acid chain; its full sequence is MTTFTAKSETVQRDWYLVDAAGKTLGRLSTELARRLRGKHKPVYTPHVDTGDYLVVINAEKIVVTGNKLKDKKYHRFTGYIGNLKTESLEQALQRHPERVIEIAVKGMLPKGPMGRTMYRKLKVYSGAEHPHAAQQPQVLDI.

The protein belongs to the universal ribosomal protein uL13 family. As to quaternary structure, part of the 50S ribosomal subunit.

In terms of biological role, this protein is one of the early assembly proteins of the 50S ribosomal subunit, although it is not seen to bind rRNA by itself. It is important during the early stages of 50S assembly. The polypeptide is Large ribosomal subunit protein uL13 (Xanthomonas oryzae pv. oryzae (strain MAFF 311018)).